The primary structure comprises 498 residues: Alpha-amylase A (498 aa).

The signal sequence occupies residues 1–21; the sequence is MMVAWWSLFLYGLQVAAPALA. Residues Cys-51 and Cys-59 are joined by a disulfide bond. Residues Gln-56 and Trp-104 each coordinate substrate. Residue Asn-142 coordinates Ca(2+). His-143 contacts substrate. Cys-171 and Cys-185 are oxidised to a cystine. Positions 183 and 196 each coordinate Ca(2+). Asn-218 carries an N-linked (GlcNAc...) asparagine glycan. Arg-225 provides a ligand contact to substrate. Ca(2+) contacts are provided by Asp-227, His-231, and Glu-251. The active-site Nucleophile is Asp-227. 230–231 serves as a coordination point for substrate; sequence KH. The active-site Proton donor is the Glu-251. Gly-255 serves as a coordination point for substrate. Cys-261 and Cys-304 are oxidised to a cystine. Residues Asp-318 and Arg-365 each coordinate substrate. A disulfide bridge connects residues Cys-461 and Cys-496.

The protein belongs to the glycosyl hydrolase 13 family. Requires Ca(2+) as cofactor.

It catalyses the reaction Endohydrolysis of (1-&gt;4)-alpha-D-glucosidic linkages in polysaccharides containing three or more (1-&gt;4)-alpha-linked D-glucose units.. The chain is Alpha-amylase A (amyA) from Aspergillus awamori (Black koji mold).